A 636-amino-acid chain; its full sequence is ATP-dependent DNA helicase YoaA (636 aa).

Residues Gln-10–Ala-272 form the Helicase ATP-binding domain. Position 45–52 (Ala-45–Thr-52) interacts with ATP. [4Fe-4S] cluster-binding residues include Cys-108, Cys-168, Cys-173, and Cys-179. The DEAH box motif lies at Asp-225–His-228.

The protein belongs to the helicase family. DinG subfamily. Interacts with the DNA polymerase III subunit Chi (holC), probably as a 1:1 complex. The cofactor is [4Fe-4S] cluster. It depends on Mg(2+) as a cofactor.

The catalysed reaction is Couples ATP hydrolysis with the unwinding of duplex DNA at the replication fork by translocating in the 5'-3' direction. This creates two antiparallel DNA single strands (ssDNA). The leading ssDNA polymer is the template for DNA polymerase III holoenzyme which synthesizes a continuous strand.. It catalyses the reaction ATP + H2O = ADP + phosphate + H(+). Its activity is regulated as follows. Non-hydrolyzable ATP analogs ATP-gamma-S and adenylyl-imidodiphosphate (AMP-PNP) inhibit helicase activity. DNA-dependent ATPase and 5'-3' DNA helicase. Has single-stranded (ss)DNA-dependent ATPase activity and 5'-3' helicase activity on forked DNA; both activities were measure in a YoaA:HolC (chi) complex. Requires a 20-35 nucleotide (nt) 5'-ssDNA tail; dsDNA with a 20 nt gap is also unwound. Unwinds damaged 3' nascent ends (such as those terminated by 3' azidothymidine (AZT), 3' dideoxy-C or an abasic site on the translocating strand), to promote repair and AZT excision. Without HolC the protein has much lower activity which could be due to YoaA instability or helicase stimulation by HolC. Genetically identified as involved in the repair of replication forks and tolerance of the chain-terminating nucleoside analog AZT. May act in proofreading during nucleotide misincorporation, it appears to aid in the removal of potential A-to-T transversion mutations in ndk mutants. The chain is ATP-dependent DNA helicase YoaA (yoaA) from Escherichia coli (strain K12).